The following is a 225-amino-acid chain: Uracil-DNA glycosylase (225 aa).

The active-site Proton acceptor is the Asp65.

The protein belongs to the uracil-DNA glycosylase (UDG) superfamily. UNG family.

The protein localises to the cytoplasm. The enzyme catalyses Hydrolyzes single-stranded DNA or mismatched double-stranded DNA and polynucleotides, releasing free uracil.. In terms of biological role, excises uracil residues from the DNA which can arise as a result of misincorporation of dUMP residues by DNA polymerase or due to deamination of cytosine. The chain is Uracil-DNA glycosylase from Bacillus mycoides (strain KBAB4) (Bacillus weihenstephanensis).